The chain runs to 138 residues: Transcription factor Atoh7-b (138 aa).

A bHLH domain is found at 33-85 (KRRLAANARERRRMQGLNTAFDSLRKVVPQWGEDKKLSKYETLQMALSYIMAL).

The protein resides in the nucleus. It localises to the perikaryon. The protein localises to the cell projection. It is found in the axon. Its function is as follows. Transcription factor that binds to DNA at the consensus sequence 5'-CAG[GC]TG-3'. Positively regulates the determination of retinal ganglion cell fate and formation of the optic nerve and retino-hypothalamic tract. Required for retinal circadian rhythm photoentrainment. Plays a role in brainstem auditory signaling and binaural processing. Regulates the differentiation of olfactory receptor neurons. During retinal neurogenesis, activates the transcription of several genes such as brn3d, coe3, cbfa2t2, glis2, elrC and xgadd45-gamma. This chain is Transcription factor Atoh7-b, found in Xenopus laevis (African clawed frog).